We begin with the raw amino-acid sequence, 143 residues long: Heat shock protein 16 (143 aa).

Residues 30-143 (QIPGELSPSI…SQTKKQIAIK (114 aa)) form the sHSP domain.

This sequence belongs to the small heat shock protein (HSP20) family.

Its subcellular location is the cytoplasm. The protein resides in the nucleus. The protein is Heat shock protein 16 (hsp16) of Schizosaccharomyces pombe (strain 972 / ATCC 24843) (Fission yeast).